The primary structure comprises 148 residues: Large ribosomal subunit protein uL15 (148 aa).

Basic residues predominate over residues 1-30 (MPSRLRKTRKLRGHVSHGHGRIGKHRKHPG). The tract at residues 1-38 (MPSRLRKTRKLRGHVSHGHGRIGKHRKHPGGRGNAGGL) is disordered. His-39 is modified ((3S)-3-hydroxyhistidine). Residues Lys-47 and Lys-55 each carry the N6-acetyllysine modification. Position 68 is a phosphoserine (Ser-68). The residue at position 110 (Lys-110) is an N6-acetyllysine.

This sequence belongs to the universal ribosomal protein uL15 family. Post-translationally, hydroxylated on His-39 by MINA.

The polypeptide is Large ribosomal subunit protein uL15 (RPL27A) (Pan troglodytes (Chimpanzee)).